The primary structure comprises 604 residues: MHFPKKKHSGNLSVVELPKEALQDSLTAAQITFKRYAHPNGNAGSAERPRHLKVESAPVVKSEPSLPRMRQPEPRSINHQYSRETLPGHSEAFSVPTTPLQTIHYDVRNKASNSPSSIAAAETAAYLAHTNSFSNRSSGVGSRDPVMDTETKPPRAPSALKNELQLNRMRIPPPSYDNNVRSRSISPQVSYSTSLSSSCSISSDGEETSYREKSTDEAFPPEPSMSSYSLASKASAKASLTDPSQRQQESDYTAMNKLNGGNIIYKGTLPDLIPRSQRKTSKPRFKHRLLRSPEQQQENLSRVYSDQTQNGRAIINTQQNVKLKTTMRRGKYAITDNDETFPYDRKSVSSDSDTDEDSNVMEIKDKKKKSRRSKIKKGLKTTAAVVGSSTSVLPFPHHHHHHHQLHNPNSHHLHTHHHTSSHKFNEDKPWKSHRDLGFITEQERKRYESMWVSNRYSYLRLLPWWPSLANEDDESHLQPLNLPQDGLMLNLVVKDIWYRSNLPRDLLVQIYNMVDTRKDGTLDRKSFIVGMWLVDQCLYGRKLTNELDQRVWNSVDGYVLGTINVKPATSDHYHNANNPLDKPSKLSVRQELKNIKRDLRNVRI.

5 disordered regions span residues 38 to 77 (HPNG…PRSI), 132 to 249 (SFSN…RQQE), 267 to 299 (GTLP…QQEN), 338 to 380 (DETF…KGLK), and 394 to 428 (PFPH…NEDK). The span at 176–185 (YDNNVRSRSI) shows a compositional bias: polar residues. Low complexity-rich tracts occupy residues 186-203 (SPQV…SISS) and 224-240 (SMSS…KASL). 3 stretches are compositionally biased toward basic residues: residues 276-290 (SQRK…HRLL), 366-379 (KKKK…KKGL), and 396-421 (PHHH…HTSS). The EH domain maps to 469-559 (ANEDDESHLQ…RVWNSVDGYV (91 aa)).

The protein belongs to the IRS4 family. As to quaternary structure, interacts with INP51.

With IRS4, acts as a positive regulator of INP51 activity and phosphatidylinositol 4,5-bisphosphate turnover. Negatively regulates signaling through the cell integrity pathway, including the MAP kinase SLT2. The sequence is that of Protein TAX4 (TAX4) from Saccharomyces cerevisiae (strain ATCC 204508 / S288c) (Baker's yeast).